The following is a 111-amino-acid chain: Nucleoid-associated protein Tmel_0542 (111 aa).

Belongs to the YbaB/EbfC family. Homodimer.

The protein localises to the cytoplasm. Its subcellular location is the nucleoid. Functionally, binds to DNA and alters its conformation. May be involved in regulation of gene expression, nucleoid organization and DNA protection. The sequence is that of Nucleoid-associated protein Tmel_0542 from Thermosipho melanesiensis (strain DSM 12029 / CIP 104789 / BI429).